We begin with the raw amino-acid sequence, 88 residues long: Small cysteine-rich outer membrane protein OmcA (88 aa).

Positions 1–18 (MKKTALLAALCSVVSLSS) are cleaved as a signal peptide. A lipid anchor (N-palmitoyl cysteine) is attached at Cys19. Cys19 carries S-diacylglycerol cysteine lipidation.

As to quaternary structure, part of a disulfide cross-linked outer membrane complex (COMC) composed of the major outer membrane porin (MOMP), the small cysteine-rich protein (OmcA) and the large cysteine-rich periplasmic protein (OmcB).

It is found in the cell outer membrane. In elementary bodies (EBs, the infectious stage, which is able to survive outside the host cell) provides the structural integrity of the outer envelope through disulfide cross-links with the large cysteine-rich periplasmic protein and the major outer membrane porin. It has been described in publications as the Sarkosyl-insoluble COMC (Chlamydia outer membrane complex), and serves as the functional equivalent of peptidoglycan. The protein is Small cysteine-rich outer membrane protein OmcA (omcA) of Chlamydia muridarum (strain MoPn / Nigg).